A 335-amino-acid polypeptide reads, in one-letter code: Beta-ketoacyl-[acyl-carrier-protein] synthase III 1 (335 aa).

Active-site residues include Cys116 and His256. The tract at residues 257–261 (QANQR) is ACP-binding. Asn286 is an active-site residue.

The protein belongs to the thiolase-like superfamily. FabH family. Homodimer.

The protein localises to the cytoplasm. It carries out the reaction malonyl-[ACP] + acetyl-CoA + H(+) = 3-oxobutanoyl-[ACP] + CO2 + CoA. The protein operates within lipid metabolism; fatty acid biosynthesis. Functionally, catalyzes the condensation reaction of fatty acid synthesis by the addition to an acyl acceptor of two carbons from malonyl-ACP. Catalyzes the first condensation reaction which initiates fatty acid synthesis and may therefore play a role in governing the total rate of fatty acid production. Possesses both acetoacetyl-ACP synthase and acetyl transacylase activities. Its substrate specificity determines the biosynthesis of branched-chain and/or straight-chain of fatty acids. The chain is Beta-ketoacyl-[acyl-carrier-protein] synthase III 1 from Bacteroides thetaiotaomicron (strain ATCC 29148 / DSM 2079 / JCM 5827 / CCUG 10774 / NCTC 10582 / VPI-5482 / E50).